Here is a 309-residue protein sequence, read N- to C-terminus: Taste receptor type 2 member 8 (309 aa).

Residues 1-7 are Extracellular-facing; sequence MFSPADN. Residues 8–28 form a helical membrane-spanning segment; the sequence is IFIILITGEFILGILGNGYIA. Over 29-50 the chain is Cytoplasmic; that stretch reads LVNWIDWIKKKKISTVDYILTN. Residues 51-71 form a helical membrane-spanning segment; sequence LVIARICLISVMVVNGIVIVL. Residues 72-82 lie on the Extracellular side of the membrane; sequence NPDVYTKNKQQ. Residues 83 to 103 form a helical membrane-spanning segment; the sequence is IVIFTFWTFANYLNMWITTCL. The Cytoplasmic segment spans residues 104 to 131; that stretch reads NVFYFLKIASSSHPLFLWLKWKIDMVVH. The helical transmembrane segment at 132 to 152 threads the bilayer; that stretch reads WILLGCFAISLLVSLIAAIVL. Over 153-184 the chain is Extracellular; the sequence is SCDYRFHAIAKHKRNITEMFHVSKXPYFEPLT. An N-linked (GlcNAc...) asparagine glycan is attached at N167. The chain crosses the membrane as a helical span at residues 185 to 205; it reads LFNLFAIVPFIVSLISFFLLV. Residues 206–239 lie on the Cytoplasmic side of the membrane; it reads RSLWRHTKQIKLYATGSRDPSTEVHVRAIKTMTS. A helical transmembrane segment spans residues 240 to 260; it reads FIFFFFLYFISSILMTFSYLM. The Extracellular portion of the chain corresponds to 261–266; that stretch reads TKYKLA. Residues 267-287 form a helical membrane-spanning segment; it reads VEFGEIAAILYPLGHSLILIV. Topologically, residues 288 to 309 are cytoplasmic; it reads LNNKLRQIFVRMLTCRKIACVI.

Belongs to the G-protein coupled receptor T2R family.

The protein localises to the membrane. Its function is as follows. Receptor that may play a role in the perception of bitterness and is gustducin-linked. May play a role in sensing the chemical composition of the gastrointestinal content. The activity of this receptor may stimulate alpha gustducin, mediate PLC-beta-2 activation and lead to the gating of TRPM5. The sequence is that of Taste receptor type 2 member 8 (TAS2R8) from Pan paniscus (Pygmy chimpanzee).